The primary structure comprises 332 residues: Putative D-threonate 4-phosphate dehydrogenase (332 aa).

Substrate-binding residues include H138 and T139. A divalent metal cation contacts are provided by H168, H211, and H266. Positions 274 and 292 each coordinate substrate.

Belongs to the PdxA family. PdxA2 subfamily. Homodimer. It depends on a divalent metal cation as a cofactor.

The catalysed reaction is 4-O-phospho-D-threonate + NAD(+) = dihydroxyacetone phosphate + CO2 + NADH. In terms of biological role, catalyzes the NAD-dependent oxidation and subsequent decarboxylation of D-threonate 4-phosphate to produce dihydroxyacetone phosphate (DHAP). This chain is Putative D-threonate 4-phosphate dehydrogenase, found in Fusobacterium nucleatum subsp. nucleatum (strain ATCC 25586 / DSM 15643 / BCRC 10681 / CIP 101130 / JCM 8532 / KCTC 2640 / LMG 13131 / VPI 4355).